The primary structure comprises 300 residues: Fe(3+) dicitrate-binding periplasmic protein FecB (300 aa).

An N-terminal signal peptide occupies residues 1 to 21; the sequence is MLAFIRFLFAGLLLVISHAFA. The Fe/B12 periplasmic-binding domain occupies 39 to 295; that stretch reads RIVVLELSFA…DTVKIFHHQP (257 aa).

Belongs to the bacterial solute-binding protein 8 family. As to quaternary structure, the complex is composed of two ATP-binding proteins (FecE), two transmembrane proteins (FecC and FecD) and a solute-binding protein (FecB). Interacts with FecC and FecD.

It is found in the periplasm. In terms of biological role, part of the ABC transporter complex FecBCDE involved in citrate-dependent Fe(3+) uptake. Binds both iron-free and iron-loaded citrate although it binds iron-loaded citrate with a higher affinity. Binds different forms of Fe(3+)-citrate as well as citrate complexed with various representative Fe(3+)-mimics (Ga(3+), Al(3+), Sc(3+) and In(3+)) and a representative divalent metal ion (Mg(2+)). Can also bind various tricarboxylates in iron-free and iron-loaded form. In Escherichia coli (strain K12), this protein is Fe(3+) dicitrate-binding periplasmic protein FecB.